We begin with the raw amino-acid sequence, 234 residues long: Ubiquitin carboxyl-terminal hydrolase 3 (234 aa).

Residues 12-232 (RWLPLESNPD…LNFNLIAISK (221 aa)) form the UCH catalytic domain. C101 acts as the Nucleophile in catalysis. The active-site Proton donor is H172.

The protein belongs to the peptidase C12 family.

It carries out the reaction Thiol-dependent hydrolysis of ester, thioester, amide, peptide and isopeptide bonds formed by the C-terminal Gly of ubiquitin (a 76-residue protein attached to proteins as an intracellular targeting signal).. The chain is Ubiquitin carboxyl-terminal hydrolase 3 from Arabidopsis thaliana (Mouse-ear cress).